The following is a 224-amino-acid chain: Urease accessory protein UreF (224 aa).

The protein belongs to the UreF family. UreD, UreF and UreG form a complex that acts as a GTP-hydrolysis-dependent molecular chaperone, activating the urease apoprotein by helping to assemble the nickel containing metallocenter of UreC. The UreE protein probably delivers the nickel.

The protein resides in the cytoplasm. Its function is as follows. Required for maturation of urease via the functional incorporation of the urease nickel metallocenter. The protein is Urease accessory protein UreF of Pseudomonas savastanoi pv. phaseolicola (strain 1448A / Race 6) (Pseudomonas syringae pv. phaseolicola (strain 1448A / Race 6)).